The primary structure comprises 172 residues: Adenylate kinase isoenzyme 6 (172 aa).

Residues G13, G15, K16, T17, and T18 each coordinate ATP. The tract at residues N33–L56 is NMPbind. The interval T108–D118 is LID. Position 109 (R109) interacts with ATP.

It belongs to the adenylate kinase family. AK6 subfamily. Monomer and homodimer. Interacts with small ribosomal subunit protein uS11. Not a structural component of 43S pre-ribosomes, but transiently interacts with them by binding to uS11. Interacts with COIL (via C-terminus).

The protein localises to the cytoplasm. The protein resides in the nucleus. It localises to the nucleoplasm. Its subcellular location is the cajal body. It carries out the reaction AMP + ATP = 2 ADP. The catalysed reaction is ATP + H2O = ADP + phosphate + H(+). Broad-specificity nucleoside monophosphate (NMP) kinase that catalyzes the reversible transfer of the terminal phosphate group between nucleoside triphosphates and monophosphates. Also has ATPase activity. Involved in the late cytoplasmic maturation steps of the 40S ribosomal particles, specifically 18S rRNA maturation. While NMP activity is not required for ribosome maturation, ATPase activity is. Associates transiently with small ribosomal subunit protein uS11. ATP hydrolysis breaks the interaction with uS11. May temporarily remove uS11 from the ribosome to enable a conformational change of the ribosomal RNA that is needed for the final maturation step of the small ribosomal subunit. Its NMP activity may have a role in nuclear energy homeostasis. May be involved in regulation of Cajal body (CB) formation. The chain is Adenylate kinase isoenzyme 6 from Rattus norvegicus (Rat).